The primary structure comprises 441 residues: Cortexillin-2 (441 aa).

Residues 1–229 form an actin-binding region; that stretch reads MDLNKEWEKV…VLYTSLFFHA (229 aa). Calponin-homology (CH) domains follow at residues 9 to 117 and 126 to 231; these read KVQE…RKYR and KSSE…HAFR. Coiled-coil stretches lie at residues 229 to 362 and 406 to 430; these read AFRA…RLGL and SFEEQAKKLASKLESENILIEKYLN.

The protein belongs to the cortexillin family. Homodimer; parallel.

It is found in the cytoplasm. The protein resides in the cytoskeleton. In terms of biological role, actin-bundling protein. When linked to F-actin the actin filaments form preferentially anti-parallel bundles that associate into meshworks. Plays a major role in cytokinesis. Negatively regulates cortical localization of rapgap1. In Dictyostelium discoideum (Social amoeba), this protein is Cortexillin-2 (ctxB).